The chain runs to 81 residues: Protein Vpu (81 aa).

Residues 1-7 (MQSLEIL) are Extracellular-facing. The chain crosses the membrane as a helical span at residues 8 to 28 (AIVALVVAAILAIVVWTIVGI). The Cytoplasmic portion of the chain corresponds to 29–81 (EIRKTLRQKKIDRLIDRIRERAEDSGNESDGDEEELSALVEMGHHAPWDVDDL). Residues 50–81 (AEDSGNESDGDEEELSALVEMGHHAPWDVDDL) form a disordered region. Residues S53 and S57 each carry the phosphoserine; by host CK2 modification. Acidic residues predominate over residues 53 to 64 (SGNESDGDEEEL). Positions 70 to 81 (MGHHAPWDVDDL) are enriched in basic and acidic residues.

Belongs to the HIV-1 VPU protein family. As to quaternary structure, homopentamer. Interacts with host CD4 and BRTC; these interactions induce proteasomal degradation of CD4. Interacts with host BST2; this interaction leads to the degradation of host BST2. Interacts with host FBXW11. Interacts with host AP1M1; this interaction plays a role in the mistrafficking and subsequent degradation of host BST2. Interacts with host RANBP2; this interaction allows Vpu to down-regulate host BLM sumoylation. Phosphorylated by host CK2. This phosphorylation is necessary for interaction with human BTRC and degradation of CD4.

It localises to the host membrane. Its activity is regulated as follows. Ion channel activity is inhibited by hexamethylene amiloride in vitro. In terms of biological role, enhances virion budding by targeting host CD4 and Tetherin/BST2 to proteasome degradation. Degradation of CD4 prevents any unwanted premature interactions between viral Env and its host receptor CD4 in the endoplasmic reticulum. Degradation of antiretroviral protein Tetherin/BST2 is important for virion budding, as BST2 tethers new viral particles to the host cell membrane. Mechanistically, Vpu bridges either CD4 or BST2 to BTRC, a substrate recognition subunit of the Skp1/Cullin/F-box protein E3 ubiquitin ligase, induces their ubiquitination and subsequent proteasomal degradation. The alteration of the E3 ligase specificity by Vpu seems to promote the degradation of host IKBKB, leading to NF-kappa-B down-regulation and subsequent apoptosis. Acts as a viroporin that forms an oligomeric ion channel in membranes. Modulates the host DNA repair mechanisms to promote degradation of nuclear viral cDNA in cells that are already productively infected in order to suppress immune sensing and proviral hyper-integration (superinfection). Manipulates PML-NBs and modulates SUMOylation of host BLM protein thereby enhancing its DNA-end processing activity toward viral unintegrated linear DNA. Also inhibits RAD52-mediated homologous repair of viral cDNA, preventing the generation of dead-end circular forms of single copies of the long terminal repeat and permitting sustained nucleolytic attack. The polypeptide is Protein Vpu (Homo sapiens (Human)).